The primary structure comprises 367 residues: Gibberellin 20 oxidase 3 (367 aa).

The 107-residue stretch at 198-304 (DGDPVMRLNH…RRSLTFFLNP (107 aa)) folds into the Fe2OG dioxygenase domain. 2-oxoglutarate is bound at residue Tyr208. Residues His223, Asp225, and His285 each coordinate Fe cation. 2-oxoglutarate contacts are provided by Arg295 and Ser297.

Belongs to the iron/ascorbate-dependent oxidoreductase family. Fe(2+) serves as cofactor. L-ascorbate is required as a cofactor.

The enzyme catalyses gibberellin A12 + 2 2-oxoglutarate + 3 O2 + H(+) = gibberellin A9 + 2 succinate + 3 CO2 + 2 H2O. It catalyses the reaction gibberellin A53 + 2 2-oxoglutarate + 3 O2 + H(+) = gibberellin A20 + 2 succinate + 3 CO2 + 2 H2O. Key oxidase enzyme in the biosynthesis of gibberellin. Catalyzes the formation of bioactive gibberellins (GAs) via a three-step oxidation at C-20 of the GA skeleton. Controls the elongation of the vegetative shoot and plant height by the regulation of active gibberellin levels. This Oryza sativa subsp. japonica (Rice) protein is Gibberellin 20 oxidase 3.